The chain runs to 681 residues: DNA ligase (681 aa).

NAD(+) is bound by residues D42–D46, S91–L92, and E120. The active-site N6-AMP-lysine intermediate is K122. Positions 143, 180, 302, and 326 each coordinate NAD(+). The Zn(2+) site is built by C420, C423, C438, and C444. A BRCT domain is found at A603–L681.

Belongs to the NAD-dependent DNA ligase family. LigA subfamily. It depends on Mg(2+) as a cofactor. Requires Mn(2+) as cofactor.

It catalyses the reaction NAD(+) + (deoxyribonucleotide)n-3'-hydroxyl + 5'-phospho-(deoxyribonucleotide)m = (deoxyribonucleotide)n+m + AMP + beta-nicotinamide D-nucleotide.. Functionally, DNA ligase that catalyzes the formation of phosphodiester linkages between 5'-phosphoryl and 3'-hydroxyl groups in double-stranded DNA using NAD as a coenzyme and as the energy source for the reaction. It is essential for DNA replication and repair of damaged DNA. This Shewanella amazonensis (strain ATCC BAA-1098 / SB2B) protein is DNA ligase.